A 224-amino-acid polypeptide reads, in one-letter code: Jacalin-related lectin 24 (224 aa).

Residues 8 to 160 form the Jacalin-type lectin domain; sequence MFKVGPIGSK…LTSIGIYVYP (153 aa).

It belongs to the jacalin lectin family.

In Arabidopsis thaliana (Mouse-ear cress), this protein is Jacalin-related lectin 24 (JAL24).